Reading from the N-terminus, the 255-residue chain is ATP synthase subunit a (255 aa).

The propeptide at 1–7 (MMFNNII) is removed in mature form. The next 6 helical transmembrane spans lie at 35-55 (FGFYIIISTIIILTLHLLITY), 91-111 (YFPFIYGLFIFILMNNLLGLI), 120-140 (HFILTFFISFTVVLGATILGF), 147-167 (FFSLFVPSGCPLGLLPLLVLI), 177-197 (VSLGLRLSANILSGHMLLVIL), and 208-228 (GIFYFLIGLIPLAFIFAFSGL).

It belongs to the ATPase A chain family. In terms of assembly, F-type ATPases have 2 components, CF(1) - the catalytic core - and CF(0) - the membrane proton channel. CF(1) has five subunits: alpha(3), beta(3), gamma(1), delta(1), epsilon(1). CF(0) has three main subunits: a, b and c.

It localises to the mitochondrion inner membrane. Mitochondrial membrane ATP synthase (F(1)F(0) ATP synthase or Complex V) produces ATP from ADP in the presence of a proton gradient across the membrane which is generated by electron transport complexes of the respiratory chain. F-type ATPases consist of two structural domains, F(1) - containing the extramembraneous catalytic core and F(0) - containing the membrane proton channel, linked together by a central stalk and a peripheral stalk. During catalysis, ATP synthesis in the catalytic domain of F(1) is coupled via a rotary mechanism of the central stalk subunits to proton translocation. Key component of the proton channel; it may play a direct role in the translocation of protons across the membrane. The sequence is that of ATP synthase subunit a (ATP6) from Trichophyton rubrum (Athlete's foot fungus).